Here is a 468-residue protein sequence, read N- to C-terminus: ATP synthase subunit beta (468 aa).

155–162 (GGAGVGKT) serves as a coordination point for ATP.

Belongs to the ATPase alpha/beta chains family. F-type ATPases have 2 components, CF(1) - the catalytic core - and CF(0) - the membrane proton channel. CF(1) has five subunits: alpha(3), beta(3), gamma(1), delta(1), epsilon(1). CF(0) has three main subunits: a(1), b(2) and c(9-12). The alpha and beta chains form an alternating ring which encloses part of the gamma chain. CF(1) is attached to CF(0) by a central stalk formed by the gamma and epsilon chains, while a peripheral stalk is formed by the delta and b chains.

Its subcellular location is the cell membrane. It carries out the reaction ATP + H2O + 4 H(+)(in) = ADP + phosphate + 5 H(+)(out). Its function is as follows. Produces ATP from ADP in the presence of a proton gradient across the membrane. The catalytic sites are hosted primarily by the beta subunits. This chain is ATP synthase subunit beta, found in Streptococcus thermophilus (strain CNRZ 1066).